Here is a 330-residue protein sequence, read N- to C-terminus: ADP-L-glycero-D-manno-heptose-6-epimerase (330 aa).

Residues 11–12 (FI), 32–33 (DD), glutamine 39, glutamine 54, 75–79 (QGACA), and asparagine 92 each bind NADP(+). The active-site Proton acceptor is the tyrosine 139. NADP(+) is bound at residue lysine 143. Residue asparagine 168 participates in substrate binding. NADP(+)-binding residues include valine 169 and lysine 177. Residue lysine 177 is the Proton acceptor of the active site. Residues arginine 179, histidine 186, 200–203 (FGEH), arginine 213, and tyrosine 292 each bind substrate.

Belongs to the NAD(P)-dependent epimerase/dehydratase family. HldD subfamily. In terms of assembly, homopentamer. NADP(+) is required as a cofactor.

The enzyme catalyses ADP-D-glycero-beta-D-manno-heptose = ADP-L-glycero-beta-D-manno-heptose. The protein operates within nucleotide-sugar biosynthesis; ADP-L-glycero-beta-D-manno-heptose biosynthesis; ADP-L-glycero-beta-D-manno-heptose from D-glycero-beta-D-manno-heptose 7-phosphate: step 4/4. It functions in the pathway bacterial outer membrane biogenesis; LPS core biosynthesis. Functionally, catalyzes the interconversion between ADP-D-glycero-beta-D-manno-heptose and ADP-L-glycero-beta-D-manno-heptose via an epimerization at carbon 6 of the heptose. This is ADP-L-glycero-D-manno-heptose-6-epimerase from Pseudomonas aeruginosa (strain ATCC 15692 / DSM 22644 / CIP 104116 / JCM 14847 / LMG 12228 / 1C / PRS 101 / PAO1).